Here is a 161-residue protein sequence, read N- to C-terminus: PTS system glucose-specific EIIA component (161 aa).

In terms of domain architecture, PTS EIIA type-1 spans 31-135 (DPVFSKKIVG…SILTPVVISN (105 aa)). H68 and H83 together coordinate Zn(2+). Catalysis depends on H83, which acts as the Tele-phosphohistidine intermediate; for EIIA activity. H83 bears the Phosphohistidine; by HPr mark.

Zn(2+) is required as a cofactor.

The protein resides in the cytoplasm. Functionally, the phosphoenolpyruvate-dependent sugar phosphotransferase system (sugar PTS), a major carbohydrate active transport system, catalyzes the phosphorylation of incoming sugar substrates concomitantly with their translocation across the cell membrane. The enzyme II complex composed of PtsG and Crr is involved in glucose transport. In Buchnera aphidicola subsp. Acyrthosiphon pisum (strain APS) (Acyrthosiphon pisum symbiotic bacterium), this protein is PTS system glucose-specific EIIA component (crr).